The following is a 351-amino-acid chain: Glycerol-3-phosphate dehydrogenase 1-like protein (351 aa).

Position 12–17 (12–17 (GSGNWG)) interacts with NAD(+). Lys122 contacts substrate. Ala155 lines the NAD(+) pocket. Residue Lys206 is the Proton acceptor of the active site. Arg271, Lys298, and Gln300 together coordinate NAD(+). Substrate is bound at residue 271–272 (RN).

The protein belongs to the NAD-dependent glycerol-3-phosphate dehydrogenase family. Interacts with SCN5A.

It is found in the cytoplasm. It catalyses the reaction sn-glycerol 3-phosphate + NAD(+) = dihydroxyacetone phosphate + NADH + H(+). In terms of biological role, plays a role in regulating cardiac sodium current; decreased enzymatic activity with resulting increased levels of glycerol 3-phosphate activating the DPD1L-dependent SCN5A phosphorylation pathway, may ultimately lead to decreased sodium current; cardiac sodium current may also be reduced due to alterations of NAD(H) balance induced by DPD1L. The protein is Glycerol-3-phosphate dehydrogenase 1-like protein (GPD1L) of Pongo abelii (Sumatran orangutan).